The following is a 1397-amino-acid chain: Centlein (1397 aa).

Disordered stretches follow at residues 1–43 (MAAR…GLAG) and 56–76 (LWRGEEGSGGRRGSGRAGAAV). At alanine 2 the chain carries N-acetylalanine. Residues serine 5, serine 9, and serine 22 each carry the phosphoserine modification. 2 coiled-coil regions span residues 95 to 126 (EEAKATRSQLLEEELSSLKEELALCQADKEFV) and 405 to 481 (VVNL…KLMA). Disordered stretches follow at residues 422–449 (LKEKLEESQGTAPSLSPHDSDSSHSGKA) and 485–521 (CDQDFSEKGTEGKHKEPPVKRSRSLSPKSSFMGSEEL). Positions 485–503 (CDQDFSEKGTEGKHKEPPV) are enriched in basic and acidic residues. Coiled coils occupy residues 674–778 (KNEK…KALR), 973–1114 (ISLR…MELL), and 1152–1299 (SESN…LKKM). Position 1219 is a phosphoserine (serine 1219). Phosphothreonine is present on threonine 1334.

Interacts with CEP250 and CEP68. Interacts with NEK2; the interaction leads to phosphorylation of CNTLN. In terms of processing, phosphorylated directly or indirectly by NEK2.

It is found in the cytoplasm. Its subcellular location is the cytoskeleton. It localises to the microtubule organizing center. The protein localises to the centrosome. The protein resides in the centriole. Functionally, required for centrosome cohesion and recruitment of CEP68 to centrosomes. The chain is Centlein from Mus musculus (Mouse).